Reading from the N-terminus, the 149-residue chain is Calmodulin (149 aa).

EF-hand domains follow at residues 8 to 43, 44 to 79, 81 to 116, and 117 to 149; these read QQIA…LGQN, PSES…KMKD, DSEA…IGEK, and LSDA…LAAK. Positions 21, 23, 25, 27, 32, 57, 59, 61, 63, 68, 94, 96, 98, 100, 105, 130, 132, 134, 136, and 141 each coordinate Ca(2+).

This sequence belongs to the calmodulin family.

In terms of biological role, calmodulin mediates the control of a large number of enzymes, ion channels and other proteins by Ca(2+). Among the enzymes to be stimulated by the calmodulin-Ca(2+) complex are a number of protein kinases and phosphatases. The protein is Calmodulin (CMD1) of Candida albicans (Yeast).